Here is a 335-residue protein sequence, read N- to C-terminus: Beta-ketoacyl-[acyl-carrier-protein] synthase III 2 (335 aa).

Residues Cys-116 and His-256 contribute to the active site. The interval 257–261 is ACP-binding; sequence QANVR. The active site involves Asn-286.

It belongs to the thiolase-like superfamily. FabH family. Homodimer.

The protein localises to the cytoplasm. The catalysed reaction is malonyl-[ACP] + acetyl-CoA + H(+) = 3-oxobutanoyl-[ACP] + CO2 + CoA. It functions in the pathway lipid metabolism; fatty acid biosynthesis. Catalyzes the condensation reaction of fatty acid synthesis by the addition to an acyl acceptor of two carbons from malonyl-ACP. Catalyzes the first condensation reaction which initiates fatty acid synthesis and may therefore play a role in governing the total rate of fatty acid production. Possesses both acetoacetyl-ACP synthase and acetyl transacylase activities. Its substrate specificity determines the biosynthesis of branched-chain and/or straight-chain of fatty acids. The protein is Beta-ketoacyl-[acyl-carrier-protein] synthase III 2 of Bacteroides thetaiotaomicron (strain ATCC 29148 / DSM 2079 / JCM 5827 / CCUG 10774 / NCTC 10582 / VPI-5482 / E50).